The chain runs to 242 residues: Venom nerve growth factor (242 aa).

An N-terminal signal peptide occupies residues 1–18; the sequence is MSMMCYTLIIAFLIGIWA. The propeptide occupies 19–125; sequence APKSEDNVPL…TLNRNIRAKR (107 aa). Over residues 47 to 66 the composition is skewed to basic and acidic residues; it reads GLKTSRNTDQRHPAPKKAED. The tract at residues 47–70 is disordered; sequence GLKTSRNTDQRHPAPKKAEDQELG. 3 disulfides stabilise this stretch: Cys-139–Cys-203, Cys-181–Cys-231, and Cys-191–Cys-233. Asn-166 carries an N-linked (GlcNAc...) asparagine glycan.

This sequence belongs to the NGF-beta family. Homodimer; non-covalently linked. Expressed by the venom gland.

The protein localises to the secreted. Nerve growth factor is important for the development and maintenance of the sympathetic and sensory nervous systems. It stimulates division and differentiation of sympathetic and embryonic sensory neurons as well as basal forebrain cholinergic neurons in the brain. Its relevance in the snake venom is not clear. However, it has been shown to inhibit metalloproteinase-dependent proteolysis of platelet glycoprotein Ib alpha, suggesting a metalloproteinase inhibition to prevent metalloprotease autodigestion and/or protection against prey proteases. Binds a lipid between the two protein chains in the homodimer. The lipid-bound form promotes histamine relase from mouse mast cells, contrary to the lipid-free form. This Drysdalia coronoides (White-lipped snake) protein is Venom nerve growth factor.